Here is a 252-residue protein sequence, read N- to C-terminus: Ubiquinone biosynthesis protein COQ4 homolog 2, mitochondrial (252 aa).

Zn(2+) contacts are provided by His-130, Asp-131, His-134, and Glu-146.

It belongs to the COQ4 family. In terms of assembly, component of a multi-subunit COQ enzyme complex. It depends on Zn(2+) as a cofactor.

It localises to the mitochondrion inner membrane. The catalysed reaction is a 4-hydroxy-3-methoxy-5-(all-trans-polyprenyl)benzoate + H(+) = a 2-methoxy-6-(all-trans-polyprenyl)phenol + CO2. The protein operates within cofactor biosynthesis; ubiquinone biosynthesis. Lyase that catalyzes the C1-decarboxylation of 4-hydroxy-3-methoxy-5-(all-trans-polyprenyl)benzoic acid into 2-methoxy-6-(all-trans-polyprenyl)phenol during ubiquinone biosynthesis. The sequence is that of Ubiquinone biosynthesis protein COQ4 homolog 2, mitochondrial from Trypanosoma cruzi (strain CL Brener).